Reading from the N-terminus, the 445-residue chain is 2-oxoisovalerate dehydrogenase subunit alpha, mitochondrial (445 aa).

The N-terminal 45 residues, 1 to 45, are a transit peptide targeting the mitochondrion; the sequence is MAVAIAAARVWRLNRGLSQAALLLLRQPGARGLARSHPPRQQQQF. A disordered region spans residues 33 to 52; the sequence is LARSHPPRQQQQFSSLDDKP. 2 residues coordinate thiamine diphosphate: tyrosine 158 and arginine 159. Position 206 (serine 206) interacts with K(+). Serine 207 is a binding site for thiamine diphosphate. Residues proline 208, threonine 211, and glutamine 212 each coordinate K(+). A Mg(2+)-binding site is contributed by glutamate 238. Thiamine diphosphate-binding residues include glycine 239, alanine 240, and arginine 265. Mg(2+)-binding residues include asparagine 267 and tyrosine 269. Histidine 336 serves as a coordination point for thiamine diphosphate. Phosphoserine; by BCKDK is present on serine 337. Threonine 338 carries the post-translational modification Phosphothreonine. Phosphoserine is present on residues serine 339 and serine 347. At lysine 356 the chain carries N6-acetyllysine; alternate. An N6-succinyllysine; alternate modification is found at lysine 356. Lysine 380 is subject to N6-succinyllysine.

Belongs to the BCKDHA family. Heterotetramer of 2 alpha/BCKDHA and 2 beta chains/BCKDHB that forms the branched-chain alpha-keto acid decarboxylase (E1) component of the BCKD complex. The branched-chain alpha-ketoacid dehydrogenase is a large complex composed of three major building blocks E1, E2 and E3. It is organized around E2, a 24-meric cubic core composed of DBT, to which are associated 6 to 12 copies of E1, and approximately 6 copies of the dehydrogenase E3, a DLD dimer. Interacts with PPM1K. Thiamine diphosphate is required as a cofactor. Mg(2+) serves as cofactor. In terms of processing, phosphorylated at Ser-337 by BCKDK and dephosphorylated by protein phosphatase PPM1K.

Its subcellular location is the mitochondrion matrix. The enzyme catalyses N(6)-[(R)-lipoyl]-L-lysyl-[protein] + 3-methyl-2-oxobutanoate + H(+) = N(6)-[(R)-S(8)-2-methylpropanoyldihydrolipoyl]-L-lysyl-[protein] + CO2. Functionally, together with BCKDHB forms the heterotetrameric E1 subunit of the mitochondrial branched-chain alpha-ketoacid dehydrogenase (BCKD) complex. The BCKD complex catalyzes the multi-step oxidative decarboxylation of alpha-ketoacids derived from the branched-chain amino-acids valine, leucine and isoleucine producing CO2 and acyl-CoA which is subsequently utilized to produce energy. The E1 subunit catalyzes the first step with the decarboxylation of the alpha-ketoacid forming an enzyme-product intermediate. A reductive acylation mediated by the lipoylamide cofactor of E2 extracts the acyl group from the E1 active site for the next step of the reaction. This chain is 2-oxoisovalerate dehydrogenase subunit alpha, mitochondrial, found in Homo sapiens (Human).